A 7079-amino-acid polypeptide reads, in one-letter code: Replicase polyprotein 1ab (7079 aa).

The region spanning 12-127 (THVQLSLPVL…YRNVLLRKNG (116 aa)) is the CoV Nsp1 globular domain. Residues 148–179 (ELGTDPIEDYEQNWNTKHGGGVLRELIRELNG) enclose the BetaCoV Nsp1 C-terminal domain. The CoV Nsp2 N-terminal domain maps to 183-456 (TRYVDNNFCG…NEDLMEILNR (274 aa)). The Zn(2+) site is built by Cys-200, Cys-231, His-234, His-236, Cys-323, Cys-326, Cys-341, Cys-344, Cys-370, Cys-373, His-382, and Cys-416. Residues 200–236 (CIKDLLARAGKSMCTLSEQLDYIESKRGVYCCREHEH) form a C2H2 region. Residues 323–344 (CNHCDEVSWQTCDFLKATCEQC) are C4. Residues 370–416 (CPACQDPEVGPEHSVADYHNHSNIETRLRKGGRTKCFGGCVFAYVGC) form a C2HC region. Residues 458–688 (RVNINIVGDF…LDVLNKALEM (231 aa)) enclose the CoV Nsp2 middle domain. The 129-residue stretch at 690–818 (IDQVIIAGAK…TNNVFSLKGG (129 aa)) folds into the CoV Nsp2 C-terminal domain. The Ubiquitin-like 1 domain maps to 822-930 (KGVTFGEDTV…MYCSFYPPDE (109 aa)). 3 Macro domains span residues 1001-1167 (VNQF…LGYL), 1213-1341 (KFKA…LPSK), and 1349-1476 (ILGT…TSSS). In terms of domain architecture, DPUP spans 1478–1544 (TSEEHFIETV…LLDKLKSLLS (67 aa)). Positions 1548-1603 (VRTIKVFTTVDNTNLHTQIVDMSMTYGQQFGPTYLDGADVTKIKPHAKHEGKTFFV) constitute a Ubiquitin-like 2 domain. A Peptidase C16 domain is found at 1617–1881 (YYHTLDESFL…YTEIQPKLDE (265 aa)). Cys-1657 (for PL-PRO activity) is an active-site residue. The Zn(2+) site is built by Cys-1735, Cys-1738, Cys-1770, and Cys-1772. The segment at 1735–1772 (CKTCGQKSTTLTGVEAVMYMGTLSYEELKTGVTIPCIC) adopts a C4-type zinc-finger fold. Residues His-1818 and Asp-1832 each act as for PL-PRO activity in the active site. The Nucleic acid-binding domain maps to 1894–2004 (PIDLVPTQPL…CLWSTKPVET (111 aa)). Residues 2029-2138 (PTSEEVVENP…LGQAAVTTTN (110 aa)) form the G2M domain. Positions 2098–2377 (LALGLRTLAT…IFFAFCYYVW (280 aa)) are HD1. Residues 2209–2229 (LFTIAMWLLLLSICLGSLIYV) form a helical membrane-spanning segment. The 71-residue stretch at 2230–2300 (TAAFGVLLSN…QVTISSYKLD (71 aa)) folds into the 3Ecto domain. 2 disulfides stabilise this stretch: Cys-2246-Cys-2274 and Cys-2265-Cys-2271. The next 2 membrane-spanning stretches (helical) occupy residues 2310–2330 (WFLAYMLFTKFFYLLGLSAIM) and 2357–2377 (MAPVSAMVRMYIFFAFCYYVW). The interval 2378 to 2468 (KSYVHIMDGC…QFKRPINPTD (91 aa)) is Y1. The region spanning 2378–2746 (KSYVHIMDGC…ITTKISLKGG (369 aa)) is the CoV Nsp3 Y domain. 8 residues coordinate Zn(2+): His-2382, Cys-2387, Cys-2392, Cys-2395, Cys-2428, His-2431, Cys-2435, and Cys-2438. The ZF1 stretch occupies residues 2382 to 2395 (HIMDGCTSSTCMMC). A ZF2 region spans residues 2428–2438 (CKAHNWNCLNC). The interval 2469 to 2563 (QSSYVVDSVA…LLDQALVSDV (95 aa)) is Y2. The coV-Y stretch occupies residues 2469–2746 (QSSYVVDSVA…ITTKISLKGG (278 aa)). The Y3 stretch occupies residues 2564–2645 (GDSTEVSVKM…ECLKLSHHSD (82 aa)). The segment at 2646–2746 (LEVTGDSCNN…ITTKISLKGG (101 aa)) is Y4. A run of 7 helical transmembrane segments spans residues 2761-2781 (LLCVLAALFCYIIMPVHSLSV), 2998-3018 (PGVFCGVDAMNLIANIFTPLV), 3028-3048 (ASVVAGGIIAILVTCAAYYFM), 3060-3080 (VVAANALLFLMSFTILCLAPA), 3083-3103 (FLPGVYSIFYLYLTFYFTNDV), 3111-3131 (WFAMFSPIVPFWITAIYVFCI), and 3148-3168 (VMFNGVTFSTFEEAALCTFLL). An HD2 region spans residues 2761–3168 (LLCVLAALFC…EEAALCTFLL (408 aa)). The region spanning 3148-3246 (VMFNGVTFST…QTSITSAVLQ (99 aa)) is the Nsp4C domain. A Peptidase C30 domain is found at 3247 to 3552 (SGFRKMAFPS…VRQCSGVTFQ (306 aa)). Catalysis depends on for 3CL-PRO activity residues His-3287 and Cys-3391. Transmembrane regions (helical) follow at residues 3570 to 3590 (FLTSLLILVQSTQWSLFFFVY), 3592 to 3612 (NAFLPFTLGIMAIAACAMLLV), 3618 to 3638 (FLCLFLLPSLATVAYFNMVYM), 3665 to 3684 (CVMYASALVLLVLMTARTVY), 3691 to 3710 (VWTLMNVITLVYKVYYGNSL), 3734 to 3754 (IMFLARAIVFVCVEYYPLLFI), and 3762 to 3782 (IMLVYCFLGYCCCCYFGLFCL). Positions 3570-3782 (FLTSLLILVQ…CCCYFGLFCL (213 aa)) are HD3. Positions 3843 to 3925 (SKMSDVKCTS…EMLDNRATLQ (83 aa)) constitute a RdRp Nsp7 cofactor domain. A RdRp Nsp8 cofactor domain is found at 3926–4123 (AIASEFSSLP…LRANSAVKLQ (198 aa)). The Nsp9 ssRNA-binding domain maps to 4124-4236 (NNELSPVALR…GSLAATVRLQ (113 aa)). The 139-residue stretch at 4237–4375 (AGNATEVPAN…CDQLREPMMQ (139 aa)) folds into the ExoN/MTase coactivator domain. Residues Cys-4310, Cys-4313, His-4319, Cys-4326, Cys-4353, Cys-4356, Cys-4364, and Cys-4366 each contribute to the Zn(2+) site. 2 zinc fingers span residues 4310-4326 (CLYCRCHIDHPNPKGFC) and 4353-4366 (CTVCGTWKGYGCSC). The region spanning 4382–4636 (FLNRVCGVSA…AAESHMDADL (255 aa)) is the NiRAN domain. Residues Asn-4584 and Asp-4593 each contribute to the Mn(2+) site. Residues 4641–4739 (IKWDLLKYDF…HNQDVNLHSS (99 aa)) form the Nsp12 Interface domain. His-4670, Cys-4676, Cys-4681, Cys-4685, and Cys-4862 together coordinate Zn(2+). In terms of domain architecture, Nsp12 RNA-dependent RNA polymerase spans 4740-5307 (RLSFKELLVY…AMYTPHTVLQ (568 aa)). The tract at residues 4742–4956 (SFKELLVYAA…HQKLLKSIAA (215 aa)) is rdRp Fingers N-ter. The rdRp Palm N-ter stretch occupies residues 4957–4995 (TRGATVVIGTSKFYGGWHNMLKTVYSDVETPHLMGWDYP). A RdRp catalytic domain is found at 4987 to 5149 (PHLMGWDYPK…CYNSNYAAQG (163 aa)). The segment at 4996–5054 (KCDRAMPNMLRIMASLVLARKHSTCCNLSHRFYRLANECAQVLSEMVMCGGSLYVKPGG) is rdRp Fingers C-ter. Positions 5017, 5020, and 5021 each coordinate Zn(2+). The tract at residues 5055–5190 (TSSGDATTAY…TKGPHEFCSQ (136 aa)) is rdRp Palm C-ter. Active-site residues include Ser-5134, Asp-5135, and Asp-5136. A rdRp Thumb region spans residues 5191 to 5307 (HTMLVKQGDD…AMYTPHTVLQ (117 aa)). In terms of domain architecture, CV ZBD spans 5308-5420 (AVGACVLCNS…TDFNAIATCD (113 aa)). Residues Cys-5312, Cys-5315, Cys-5323, Cys-5326, Cys-5333, Cys-5336, His-5340, His-5346, Cys-5357, Cys-5362, Cys-5379, and His-5382 each coordinate Zn(2+). Residues 5564-5745 (NISDEFSSNV…MKTIGPDMFL (182 aa)) form the (+)RNA virus helicase ATP-binding domain. 5589-5596 (GPPGTGKS) contributes to the ATP binding site. The 170-residue stretch at 5746 to 5915 (GTCRRCPAEI…TLQAENVTGL (170 aa)) folds into the (+)RNA virus helicase C-terminal domain. The region spanning 5980–6195 (MFITREEAIR…RCLAVHECFV (216 aa)) is the ExoN domain. Catalysis depends on residues Asp-5998, Glu-6000, and Glu-6099. 7 residues coordinate Zn(2+): Cys-6115, Cys-6118, Cys-6134, His-6137, His-6165, Cys-6169, and His-6172. Residues His-6176 and Asp-6181 contribute to the active site. Cys-6187 contacts Zn(2+). The N7-MTase domain occupies 6204–6435 (YPIIGDELKI…NLWNTFTRLQ (232 aa)). Residue 6239-6245 (DIGNPKA) participates in S-adenosyl-L-methionine binding. A gpppA-binding region spans residues 6322-6336 (CDGGSLYVNKHAFHT). Residues Cys-6360, Cys-6381, Cys-6392, and His-6395 each contribute to the Zn(2+) site. Positions 6436-6496 (SLENVAYNVV…NVAFELWAKR (61 aa)) constitute a Nsp15 N-terminal oligomerization domain. The AV-Nsp11N/CoV-Nsp15M domain maps to 6497–6622 (NIKPVPEIKI…YFKKVDGIIQ (126 aa)). The region spanning 6639 to 6778 (KPRSKMETDF…KDGHVETFYP (140 aa)) is the NendoU domain. Catalysis depends on residues His-6669, His-6684, Lys-6724, Lys-6827, Asp-6911, Lys-6951, and Glu-6984. Residues 6783–7077 (SQAWQPGVAM…RVVVSSDILV (295 aa)) enclose the Nidovirus-type SAM-dependent 2'-O-MTase domain.

Belongs to the coronaviruses polyprotein 1ab family. As to quaternary structure, interacts with host PHB and PHB2. In terms of assembly, interacts with papain-like protease nsp3 and non-structural protein 6. Monomer. Homodimer. Only the homodimer shows catalytic activity. As to quaternary structure, interacts with nsp8 and nsp12 to form the replication-transcription complex (RTC): nsp12, nsp7, two subunits of nsp8, and up to two subunits of nsp13. In terms of assembly, interacts with nsp7, nsp13 and nsp12 to form the replication-transcription complex (RTC): nsp12, nsp7, two subunits of nsp8, and up to two subunits of nsp13. Interacts with nsp12. As to quaternary structure, interacts with proofreading exoribonuclease nsp14 and 2'-O-methyltransferase nsp16; these interactions enhance nsp14 and nsp16 enzymatic activities. In terms of assembly, interacts with nsp7 and nsp8 to form the replication-transcription complex (RTC): nsp12, nsp7, two subunits of nsp8, and up to two subunits of nsp13. Interacts with nsp9. Interacts with nsp8 to form the replication-transcription complex (RTC): nsp12, nsp7, two subunits of nsp8, and up to two subunits of nsp13. Requires Mn(2+) as cofactor. The cofactor is Mg(2+). Post-translationally, specific enzymatic cleavages in vivo by its own proteases yield mature proteins. 3CL-PRO and PL-PRO proteinases are autocatalytically processed.

The protein resides in the host membrane. It is found in the host cytoplasm. The protein localises to the host perinuclear region. Its subcellular location is the host endoplasmic reticulum-Golgi intermediate compartment. It carries out the reaction RNA(n) + a ribonucleoside 5'-triphosphate = RNA(n+1) + diphosphate. The enzyme catalyses ATP + H2O = ADP + phosphate + H(+). It catalyses the reaction Thiol-dependent hydrolysis of ester, thioester, amide, peptide and isopeptide bonds formed by the C-terminal Gly of ubiquitin (a 76-residue protein attached to proteins as an intracellular targeting signal).. The catalysed reaction is a 5'-end (N(7)-methyl 5'-triphosphoguanosine)-ribonucleoside in mRNA + S-adenosyl-L-methionine = a 5'-end (N(7)-methyl 5'-triphosphoguanosine)-(2'-O-methyl-ribonucleoside) in mRNA + S-adenosyl-L-homocysteine + H(+). It carries out the reaction uridylyl-uridylyl-ribonucleotide-RNA = a 3'-end uridylyl-2',3'-cyclophospho-uridine-RNA + a 5'-end dephospho-ribonucleoside-RNA. The enzyme catalyses a 5'-end diphospho-ribonucleoside in mRNA + GTP + H(+) = a 5'-end (5'-triphosphoguanosine)-ribonucleoside in mRNA + diphosphate. It catalyses the reaction a 5'-end (5'-triphosphoguanosine)-ribonucleoside in mRNA + S-adenosyl-L-methionine = a 5'-end (N(7)-methyl 5'-triphosphoguanosine)-ribonucleoside in mRNA + S-adenosyl-L-homocysteine. Its function is as follows. The replicase polyprotein of coronaviruses is a multifunctional protein: it contains the activities necessary for the transcription of negative stranded RNA, leader RNA, subgenomic mRNAs and progeny virion RNA as well as proteinases responsible for the cleavage of the polyprotein into functional products. Inhibits host translation by interacting with the 40S ribosomal subunit. The nsp1-40S ribosome complex further induces an endonucleolytic cleavage near the 5'UTR of host mRNAs, targeting them for degradation. Viral mRNAs are not susceptible to nsp1-mediated endonucleolytic RNA cleavage thanks to the presence of a 5'-end leader sequence and are therefore protected from degradation. By suppressing host gene expression, nsp1 facilitates efficient viral gene expression in infected cells and evasion from host immune response. In terms of biological role, may play a role in the modulation of host cell survival signaling pathway by interacting with host PHB and PHB2. Indeed, these two proteins play a role in maintaining the functional integrity of the mitochondria and protecting cells from various stresses. Functionally, responsible for the cleavages located at the N-terminus of the replicase polyprotein. In addition, PL-PRO possesses a deubiquitinating/deISGylating activity and processes both 'Lys-48'- and 'Lys-63'-linked polyubiquitin chains from cellular substrates. Participates together with nsp4 in the assembly of virally-induced cytoplasmic double-membrane vesicles necessary for viral replication. Antagonizes innate immune induction of type I interferon by blocking the phosphorylation, dimerization and subsequent nuclear translocation of host IRF3. Also prevents host NF-kappa-B signaling. Its function is as follows. Participates in the assembly of virally-induced cytoplasmic double-membrane vesicles necessary for viral replication. Cleaves the C-terminus of replicase polyprotein at 11 sites. Recognizes substrates containing the core sequence [ILMVF]-Q-|-[SGACN]. Also able to bind an ADP-ribose-1''-phosphate (ADRP). In terms of biological role, plays a role in the initial induction of autophagosomes from host endoplasmic reticulum. Later, limits the expansion of these phagosomes that are no longer able to deliver viral components to lysosomes. Functionally, forms a hexadecamer with nsp8 (8 subunits of each) that may participate in viral replication by acting as a primase. Alternatively, may synthesize substantially longer products than oligonucleotide primers. Its function is as follows. Forms a hexadecamer with nsp7 (8 subunits of each) that may participate in viral replication by acting as a primase. Alternatively, may synthesize substantially longer products than oligonucleotide primers. Forms a primer, NSP9-pU, which is utilized by the polymerase for the initiation of RNA chains. Interacts with ribosome signal recognition particle RNA (SRP). Together with NSP8, suppress protein integration into the cell membrane, thereby disrupting host immune defenses. In terms of biological role, plays a pivotal role in viral transcription by stimulating both nsp14 3'-5' exoribonuclease and nsp16 2'-O-methyltransferase activities. Therefore plays an essential role in viral mRNAs cap methylation. Functionally, RNA-directed RNA polymerase that catalyzes the transcription of viral genomic and subgenomic RNAs. Acts in complex with nsp7 and nsp8 to transcribe both the minus and positive strands of genomic RNA. The kinase-like NiRAN domain of NSP12 attaches one or more nucleotides to the amino terminus of NSP9, forming a covalent RNA-protein intermediate that serves as transcription/replication primer. Subgenomic RNAs (sgRNAs) are formed by discontinuous transcription: The polymerase has the ability to pause at transcription-regulating sequences (TRS) and jump to the leader TRS, resulting in a major deletion. This creates a series of subgenomic RNAs that are replicated, transcribed and translated. In addition, Nsp12 is a subunit of the viral RNA capping enzyme that catalyzes the RNA guanylyltransferase reaction for genomic and sub-genomic RNAs. Subsequently, the NiRAN domain transfers RNA to GDP, and forms the core cap structure GpppA-RNA. Its function is as follows. Multi-functional protein with a zinc-binding domain in N-terminus displaying RNA and DNA duplex-unwinding activities with 5' to 3' polarity. Activity of helicase is dependent on magnesium. Plays a role in viral RNA synthesis through two distinct activities. The N7-guanine methyltransferase activity plays a role in the formation of the cap structure GpppA-RNA. The proofreading exoribonuclease reduces the sensitivity of the virus to RNA mutagens during replication. This activity acts on both ssRNA and dsRNA in a 3'-5' direction. In terms of biological role, plays a role in viral transcription/replication and prevents the simultaneous activation of host cell dsRNA sensors, such as MDA5/IFIH1, OAS, and PKR. Acts by degrading the 5'-polyuridines generated during replication of the poly(A) region of viral genomic and subgenomic RNAs. Catalyzes a two-step reaction in which a 2'3'-cyclic phosphate (2'3'-cP) is first generated by 2'-O transesterification, which is then hydrolyzed to a 3'-phosphate (3'-P). If not degraded, poly(U) RNA would hybridize with poly(A) RNA tails and activate host dsRNA sensors. Functionally, methyltransferase that mediates mRNA cap 2'-O-ribose methylation to the 5'-cap structure of viral mRNAs. N7-methyl guanosine cap is a prerequisite for binding of nsp16. Therefore plays an essential role in viral mRNAs cap methylation which is essential to evade immune system. The chain is Replicase polyprotein 1ab (rep) from Bat coronavirus 279/2005 (BtCoV).